A 498-amino-acid chain; its full sequence is Diacylglycerol O-acyltransferase 1 (498 aa).

Residues 1 to 66 (MGDRGGAGSS…AHTRDKDGRT (66 aa)) are disordered. The Cytoplasmic segment spans residues 1 to 92 (MGDRGGAGSS…SLFSSDSGFS (92 aa)). The involved in homomerization stretch occupies residues 1–100 (MGDRGGAGSS…FSNYRGILNW (100 aa)). Position 20 is a phosphoserine (S20). A helical membrane pass occupies residues 93-127 (NYRGILNWCVVMLILSNARLFLENLIKYGILVDPI). The Lumenal portion of the chain corresponds to 128–139 (QVVSLFLKDPYS). The interval 128–139 (QVVSLFLKDPYS) is extracellular loop 1 (EL1). The helical transmembrane segment at 140 to 165 (WPAPCVIIASNIFVVAAFQIEKRLAV) threads the bilayer. The segment at 140 to 498 (WPAPCVIIAS…VLNYDAPVGV (359 aa)) is MBOAT fold. Over 166–170 (GALTE) the chain is Cytoplasmic. The chain crosses the membrane as a helical span at residues 171–193 (QMGLLLHVVNLATIICFPAAVAL). Residues 194–200 (LVESITP) lie on the Lumenal side of the membrane. Residues 201–232 (VGSVFALASYSIMFLKLYSYRDVNLWCRQRRV) traverse the membrane as a helical segment. The Cytoplasmic segment spans residues 233–284 (KAKAVSTGKKVSGAAAQQAVSYPDNLTYRDLYYFIFAPTLCYELNFPRSPRI). An intracellular loop 1 (IL1) region spans residues 235-287 (KAVSTGKKVSGAAAQQAVSYPDNLTYRDLYYFIFAPTLCYELNFPRSPRIRKR). The helical transmembrane segment at 285-319 (RKRFLLRRVLEMLFFTQLQVGLIQQWMVPTIQNSM) threads the bilayer. At 320–326 (KPFKDMD) the chain is on the lumenal side. The helical transmembrane segment at 327 to 364 (YSRIIERLLKLAVPNHLIWLIFFYWFFHSCLNAVAELL) threads the bilayer. Topologically, residues 365–410 (QFGDREFYRDWWNAESVTYFWQNWNIPVHKWCIRHFYKPMLRHGSS) are cytoplasmic. The segment at 365–410 (QFGDREFYRDWWNAESVTYFWQNWNIPVHKWCIRHFYKPMLRHGSS) is intracellular loop 2 (IL2). An FYXDWWN motif motif is present at residues 371–377 (FYRDWWN). An acyl-CoA is bound by residues 385-393 (WQNWNIPVH), Y401, and R415. The segment at 391–405 (PVHKWCIRHFYKPML) is amphipathic helix (AH). The chain crosses the membrane as a helical span at residues 411-431 (KWVARTGVFLTSAFFHEYLVS). Residue H426 is part of the active site. Over 432–439 (VPLRMFRL) the chain is Lumenal. A helical membrane pass occupies residues 440-458 (WAFTAMMAQVPLAWIVGRF). Over 459 to 460 (FQ) the chain is Cytoplasmic. Residues 461 to 492 (GNYGNAAVWVTLIIGQPVAVLMYVHDYYVLNY) form a helical membrane-spanning segment. An an acyl-CoA-binding site is contributed by Y488. Over 493 to 498 (DAPVGV) the chain is Lumenal.

Belongs to the membrane-bound acyltransferase family. Sterol o-acyltransferase subfamily. As to quaternary structure, homodimer or homotetramer; both forms have similar enzymatic activities.

The protein resides in the endoplasmic reticulum membrane. The enzyme catalyses an acyl-CoA + a 1,2-diacyl-sn-glycerol = a triacyl-sn-glycerol + CoA. It catalyses the reaction all-trans-retinol + an acyl-CoA = an all-trans-retinyl ester + CoA. The catalysed reaction is 1-octadecanoyl-2-(5Z,8Z,11Z,14Z-eicosatetraenoyl)-sn-glycerol + (9Z)-octadecenoyl-CoA = 1-octadecanoyl-2-(5Z,8Z,11Z,14Z)-eicosatetraenoyl-3-(9Z)-octadecenoyl-sn-glycerol + CoA. It carries out the reaction hexadecane-1,2-diol + 2 hexadecanoyl-CoA = 1,2-O,O-dihexadecanoyl-1,2-hexadecanediol + 2 CoA. The enzyme catalyses hexadecane-1,2-diol + hexadecanoyl-CoA = 2-hydroxyhexadecyl hexadecanoate + CoA. It catalyses the reaction 2-(9Z-octadecenoyl)-glycerol + hexadecanoyl-CoA = 1-hexadecanoyl-2-(9Z-octadecenoyl)-sn-glycerol + CoA. The catalysed reaction is 1,2-di-(9Z-octadecenoyl)-sn-glycerol + hexadecanoyl-CoA = 1,2-di-(9Z)-octadecenoyl-3-hexadecanoyl-sn-glycerol + CoA. It carries out the reaction hexadecan-1-ol + hexadecanoyl-CoA = hexadecanyl hexadecanoate + CoA. The enzyme catalyses all-trans-retinol + hexadecanoyl-CoA = all-trans-retinyl hexadecanoate + CoA. It catalyses the reaction 13-cis-retinol + hexadecanoyl-CoA = 13-cis-retinyl hexadecanoate + CoA. The catalysed reaction is 1,2-di-(9Z-octadecenoyl)-sn-glycerol + (9Z)-octadecenoyl-CoA = 1,2,3-tri-(9Z-octadecenoyl)-glycerol + CoA. It carries out the reaction 1,3-di-(9Z-octadecenoyl)-glycerol + (9Z)-octadecenoyl-CoA = 1,2,3-tri-(9Z-octadecenoyl)-glycerol + CoA. The enzyme catalyses 2,3-di-(9Z)-octadecenoyl-sn-glycerol + (9Z)-octadecenoyl-CoA = 1,2,3-tri-(9Z-octadecenoyl)-glycerol + CoA. It catalyses the reaction 1-O-(9Z-octadecenyl)-glycerol + (9Z)-octadecenoyl-CoA = 1-O-(9Z-octadecyl)-3-(9Z-octadecenoyl)-glycerol + CoA. The catalysed reaction is 1-(9Z-octadecenoyl)-glycerol + (9Z)-octadecenoyl-CoA = 1,2-di-(9Z-octadecenoyl)-glycerol + CoA. It carries out the reaction 2-(9Z-octadecenoyl)-glycerol + (9Z)-octadecenoyl-CoA = 1,2-di-(9Z-octadecenoyl)-sn-glycerol + CoA. The enzyme catalyses 1-O-(9Z-octadecyl)-3-(9Z-octadecenoyl)-glycerol + (9Z)-octadecenoyl-CoA = 1-O-(9Z-octadecenyl)-2,3-di-(9Z-octadecenoyl)glycerol + CoA. It catalyses the reaction 1,2-di-(9Z-octadecenoyl)-glycerol + (9Z)-octadecenoate + H(+) = 1,2,3-tri-(9Z-octadecenoyl)-glycerol + H2O. Its pathway is lipid metabolism; glycerolipid metabolism. Its function is as follows. Catalyzes the terminal and only committed step in triacylglycerol synthesis by using diacylglycerol and fatty acyl CoA as substrates. Highly expressed in epithelial cells of the small intestine and its activity is essential for the absorption of dietary fats. In liver, plays a role in esterifying exogenous fatty acids to glycerol, and is required to synthesize fat for storage. Also present in female mammary glands, where it produces fat in the milk. May be involved in VLDL (very low density lipoprotein) assembly. In contrast to DGAT2 it is not essential for survival. Functions as the major acyl-CoA retinol acyltransferase (ARAT) in the skin, where it acts to maintain retinoid homeostasis and prevent retinoid toxicity leading to skin and hair disorders. Exhibits additional acyltransferase activities, includin acyl CoA:monoacylglycerol acyltransferase (MGAT), wax monoester and wax diester synthases. Also able to use 1-monoalkylglycerol (1-MAkG) as an acyl acceptor for the synthesis of monoalkyl-monoacylglycerol (MAMAG). In Mus musculus (Mouse), this protein is Diacylglycerol O-acyltransferase 1.